The chain runs to 131 residues: Profilin-7 (131 aa).

Cys13 and Cys115 form a disulfide bridge. The Involved in PIP2 interaction motif lies at 81 to 97 (AVIRGKKGAGGITIKKT). The residue at position 111 (Thr111) is a Phosphothreonine.

This sequence belongs to the profilin family. In terms of assembly, occurs in many kinds of cells as a complex with monomeric actin in a 1:1 ratio. In terms of processing, phosphorylated by MAP kinases.

It localises to the cytoplasm. The protein localises to the cytoskeleton. Its function is as follows. Binds to actin and affects the structure of the cytoskeleton. At high concentrations, profilin prevents the polymerization of actin, whereas it enhances it at low concentrations. This Phleum pratense (Common timothy) protein is Profilin-7.